Here is a 350-residue protein sequence, read N- to C-terminus: Bifunctional methylenetetrahydrofolate dehydrogenase/cyclohydrolase, mitochondrial (350 aa).

The N-terminal 35 residues, 1–35 (MASVSLLSALAVRLLRPTHGCHPRLQPFHLAAVRN), are a transit peptide targeting the mitochondrion. K50 carries the post-translational modification N6-acetyllysine; alternate. K50 participates in a covalent cross-link: Glycyl lysine isopeptide (Lys-Gly) (interchain with G-Cter in SUMO2); alternate. Substrate is bound by residues 84–88 (YVLNK) and 131–133 (VQL). Residues 200–202 (GRS) and R233 each bind NAD(+). 309 to 313 (PGGVG) contributes to the substrate binding site.

This sequence belongs to the tetrahydrofolate dehydrogenase/cyclohydrolase family. As to quaternary structure, homodimer. It depends on Mg(2+) as a cofactor.

It is found in the mitochondrion. The enzyme catalyses (6R)-5,10-methylene-5,6,7,8-tetrahydrofolate + NAD(+) = (6R)-5,10-methenyltetrahydrofolate + NADH. It catalyses the reaction (6R)-5,10-methenyltetrahydrofolate + H2O = (6R)-10-formyltetrahydrofolate + H(+). Although its dehydrogenase activity is NAD-specific, it can also utilize NADP at a reduced efficiency. In Mus musculus (Mouse), this protein is Bifunctional methylenetetrahydrofolate dehydrogenase/cyclohydrolase, mitochondrial (Mthfd2).